Consider the following 1314-residue polypeptide: Synergin gamma (1314 aa).

Positions 115 to 155 (MQKQFAEEQQKRFEQQQKLLEEERKRRQFEEQKQKLRLLSS) form a coiled coil. Positions 178 to 199 (GFSRDAKMHPTPASHPKKPGPS) are disordered. Residues 295–388 (NESLVPDAYK…QFPAAPIPTL (94 aa)) enclose the EH domain. The DFXDF motif 1 signature appears at 457-461 (DFQDF). The tract at residues 460–498 (DFQDASKSGSLDDSFSDFQELPASSKTSNSQHGNSAPSL) is disordered. Residues 462-496 (QDASKSGSLDDSFSDFQELPASSKTSNSQHGNSAP) are compositionally biased toward polar residues. The residue at position 473 (serine 473) is a Phosphoserine. At lysine 513 the chain carries N6-acetyllysine. Residues 518–786 (KGIAADKSSE…ADFHSSKFSS (269 aa)) are interaction with AP1G1. At serine 580 the chain carries Phosphoserine. An interaction with AP1G1, AP1G2 and GGA1 region spans residues 666–678 (LADDFGEFSLFGE). Residues 690-694 (DFADF) carry the DFXDF motif 2 motif. Position 720 is a phosphoserine (serine 720). Lysine 744 is modified (N6-acetyllysine). 2 positions are modified to phosphoserine: serine 752 and serine 772. The short motif at 775–779 (DFADF) is the DFXDF motif 3 element. 6 positions are modified to phosphoserine: serine 812, serine 852, serine 855, serine 909, serine 919, and serine 935. Disordered stretches follow at residues 972–1026 (PQTS…DFGE) and 1073–1102 (SLSLGDKEISRSSPSPALEQPFRDRSNTLN). Positions 976 to 990 (EQKEYENRDYKDFTK) are enriched in basic and acidic residues. Polar residues predominate over residues 1001-1019 (EATCPSPASSGASQETPNE). Phosphoserine is present on residues serine 1006, serine 1073, serine 1075, serine 1087, and serine 1098. Position 1100 is a phosphothreonine (threonine 1100).

Self-associates. Interacts with GGA1 (via GAE domain). Interacts with GGA2 and GGA3. Interacts with AP1G1 (via GAE domain), a subunit of adapter protein complex AP-1. Interacts with AP1G2 (via GAE domain) a subunit of adapter protein complex AP-1. Component of the aftiphilin/p200/gamma-synergin complex, at least composed of AFTPH/aftiphilin, HEATR5B/p200a and SYNRG/gamma-synergin, which plays a role in the AP1G1/AP-1-mediated trafficking of transferrin from early to recycling endosomes. Within the complex interacts with AFTPH/aftiphilin and HEATR5B/p200a; the interactions are direct. Interacts (via EH domain) with SCAMP1.

The protein resides in the cytoplasm. It localises to the golgi apparatus. Its subcellular location is the trans-Golgi network membrane. It is found in the perinuclear region. The protein localises to the cytoplasmic vesicle. The protein resides in the clathrin-coated vesicle. Functionally, plays a role in endocytosis and/or membrane trafficking at the trans-Golgi network (TGN). May act by linking the adapter protein complex AP-1 to other proteins. Component of clathrin-coated vesicles. Component of the aftiphilin/p200/gamma-synergin complex, which plays roles in AP1G1/AP-1-mediated protein trafficking including the trafficking of transferrin from early to recycling endosomes, and the membrane trafficking of furin and the lysosomal enzyme cathepsin D between the trans-Golgi network (TGN) and endosomes. The protein is Synergin gamma of Homo sapiens (Human).